Consider the following 316-residue polypeptide: Cell surface superoxide dismutase [Cu-Zn] 6 (316 aa).

The first 18 residues, 1–18 (MIFIPIIILIYLVSIAAS), serve as a signal peptide directing secretion. 3 residues coordinate Cu cation: histidine 78, histidine 80, and histidine 96. Positions 96 and 119 each coordinate Zn(2+). Asparagine 128 carries an N-linked (GlcNAc...) asparagine glycan. Histidine 159 contacts Cu cation. N-linked (GlcNAc...) asparagine glycosylation is found at asparagine 162 and asparagine 240. The disordered stretch occupies residues 243-263 (DNVYSPEETRPSDQNKKSHRH). Residues 249-258 (EETRPSDQNK) are compositionally biased toward basic and acidic residues. Residues asparagine 278 and asparagine 281 are each glycosylated (N-linked (GlcNAc...) asparagine). Serine 288 is lipidated: GPI-anchor amidated serine. Residues 289–316 (SDCLNDGMMVTGSVFGSLVLGIAAGIFV) constitute a propeptide, removed in mature form.

This sequence belongs to the Cu-Zn superoxide dismutase family. It depends on Cu cation as a cofactor. Zn(2+) is required as a cofactor. The GPI-anchor is attached to the protein in the endoplasmic reticulum and serves to target the protein to the cell surface. There, the glucosamine-inositol phospholipid moiety is cleaved off and the GPI-modified mannoprotein is covalently attached via its lipidless GPI glycan remnant to the 1,6-beta-glucan of the outer cell wall layer.

It is found in the secreted. Its subcellular location is the cell wall. The protein localises to the membrane. It carries out the reaction 2 superoxide + 2 H(+) = H2O2 + O2. Superoxide dismutases serve to convert damaging superoxide radicals, a key form of ROS, to less damaging hydrogen peroxide that can be converted into water by catalase action. May be involved protection against extracellular stress. This Candida albicans (strain SC5314 / ATCC MYA-2876) (Yeast) protein is Cell surface superoxide dismutase [Cu-Zn] 6 (SOD6).